Reading from the N-terminus, the 146-residue chain is UPF0260 protein Spea_2441 (146 aa).

The protein belongs to the UPF0260 family.

The protein is UPF0260 protein Spea_2441 of Shewanella pealeana (strain ATCC 700345 / ANG-SQ1).